We begin with the raw amino-acid sequence, 713 residues long: Cadherin-13 (713 aa).

The first 22 residues, 1–22 (MQPRTPLVLCVLLSQVLLLTSA), serve as a signal peptide directing secretion. Positions 23-138 (EDLDCIPGFQ…RTSPVPRQKR (116 aa)) are excised as a propeptide. N-linked (GlcNAc...) asparagine glycosylation is found at N52 and N86. Cadherin domains lie at 139 to 245 (SIVV…RPIF), 246 to 363 (REGP…SPKF), 364 to 477 (TKKE…GPVF), 478 to 585 (YPDP…APFI), and 584 to 690 (FIYP…VDSN). 7 N-linked (GlcNAc...) asparagine glycosylation sites follow: N382, N489, N500, N530, N598, N638, and N671. N690 carries the GPI-anchor amidated asparagine lipid modification. Residues 691 to 713 (AVGALRFSLPSLLLLSLFSLACL) constitute a propeptide, removed in mature form.

As to quaternary structure, by contrast to classical cadherins, homodimerization in trans is not mediated by cadherin EC1 domain strand-swapping, but instead through a homophilic adhesive interface which joins two elongated EC1-EC2 domains through a region near their Ca2+-binding sites to form a tetrahedral, X-like shape.

The protein resides in the cell membrane. It localises to the cytoplasm. In terms of biological role, cadherins are calcium-dependent cell adhesion proteins. They preferentially interact with themselves in a homophilic manner in connecting cells; cadherins may thus contribute to the sorting of heterogeneous cell types. May act as a negative regulator of neural cell growth. This Pongo abelii (Sumatran orangutan) protein is Cadherin-13 (CDH13).